Consider the following 224-residue polypeptide: tRNA (guanine-N(7)-)-methyltransferase (224 aa).

S-adenosyl-L-methionine is bound by residues Glu-45, Glu-70, Asp-97, and Asp-119. Asp-119 is an active-site residue. Residues Lys-123, Asp-155, and 199 to 202 (TEYE) contribute to the substrate site.

It belongs to the class I-like SAM-binding methyltransferase superfamily. TrmB family.

It catalyses the reaction guanosine(46) in tRNA + S-adenosyl-L-methionine = N(7)-methylguanosine(46) in tRNA + S-adenosyl-L-homocysteine. It functions in the pathway tRNA modification; N(7)-methylguanine-tRNA biosynthesis. Functionally, catalyzes the formation of N(7)-methylguanine at position 46 (m7G46) in tRNA. In Ureaplasma parvum serovar 3 (strain ATCC 27815 / 27 / NCTC 11736), this protein is tRNA (guanine-N(7)-)-methyltransferase.